The following is a 133-amino-acid chain: ATP synthase epsilon chain (133 aa).

It belongs to the ATPase epsilon chain family. In terms of assembly, F-type ATPases have 2 components, CF(1) - the catalytic core - and CF(0) - the membrane proton channel. CF(1) has five subunits: alpha(3), beta(3), gamma(1), delta(1), epsilon(1). CF(0) has three main subunits: a, b and c.

It is found in the cell membrane. Its function is as follows. Produces ATP from ADP in the presence of a proton gradient across the membrane. This is ATP synthase epsilon chain (atpC) from Mycoplasma pneumoniae (strain ATCC 29342 / M129 / Subtype 1) (Mycoplasmoides pneumoniae).